The chain runs to 102 residues: RNA-binding protein Hfq (102 aa).

The Sm domain occupies 9–68 (DPFLNALRRERVPVSIYLVNGIKLQGQIESFDQFVILLKNTVSQMVYKHAISTVVPSRPV). The tract at residues 63 to 102 (VPSRPVSHHSNNAGGGSNNYHHSNNAQPSSAASQDSEDAE) is disordered. A compositionally biased stretch (low complexity) spans 70 to 96 (HHSNNAGGGSNNYHHSNNAQPSSAASQ).

Belongs to the Hfq family. Homohexamer.

Functionally, RNA chaperone that binds small regulatory RNA (sRNAs) and mRNAs to facilitate mRNA translational regulation in response to envelope stress, environmental stress and changes in metabolite concentrations. Also binds with high specificity to tRNAs. This is RNA-binding protein Hfq from Cronobacter sakazakii (strain ATCC BAA-894) (Enterobacter sakazakii).